We begin with the raw amino-acid sequence, 181 residues long: MHTQVHTARLVHTADLDSETRQDIRQMVTGAFAGDFTETDWEHTLGGMHALIWHHGAIIAHAAVIQRRLIYRGNALRCGYVEGVAVRADWRGQRLVSALLDAVEQVMRGAYQLGALSSSARARRLYASRGWLPWHGPTSVLAPTGPVRTPDDDGTVFVLPIDISLDTSAELMCDWRAGDVW.

The N-acetyltransferase domain maps to 11 to 162; sequence VHTADLDSET…DGTVFVLPID (152 aa). Substrate is bound by residues aspartate 35 and 82 to 83; that span reads EG. Residues 84–86 and 91–96 each bind CoA; these read VAV and RGQRLV. Substrate contacts are provided by residues serine 117 and 151–152; that span reads DD.

It belongs to the AAC(2')-I acetyltransferase family. In terms of assembly, homodimer.

In terms of biological role, catalyzes the coenzyme A-dependent acetylation of the 2' hydroxyl or amino group of a broad spectrum of aminoglycosides. It confers resistance to aminoglycosides. This is Aminoglycoside 2'-N-acetyltransferase (aac) from Mycobacterium bovis (strain ATCC BAA-935 / AF2122/97).